We begin with the raw amino-acid sequence, 59 residues long: UPF0434 protein Sbal_1685 (59 aa).

This sequence belongs to the UPF0434 family.

The protein is UPF0434 protein Sbal_1685 of Shewanella baltica (strain OS155 / ATCC BAA-1091).